We begin with the raw amino-acid sequence, 335 residues long: DNA-directed RNA polymerases I and III subunit RPAC1 (335 aa).

N-acetylserine is present on S2. Phosphoserine is present on S17.

It belongs to the archaeal Rpo3/eukaryotic RPB3 RNA polymerase subunit family. In terms of assembly, component of the RNA polymerase I (Pol I) complex consisting of 14 subunits: RPA135, RPA190, RPC40, RPA14, RPB5, RPO26, RPA43, RPB8, RPA12, RPB10, RPC19, RPC10, RPA49 and RPA34. The complex is composed of a horseshoe-shaped core containing ten subunits (RPA135, RPA190, RPB5, RPO26, RPB8, RPB10, RPC10, RPA12, RPC19 and RPC40) where RPA135 and RPA190 form the DNA-binding cleft. Outside of the core, RPA14 and RPA43 form the stalk that mediates interactions with transcription initiation factors and newly synthesized RNA. Component of the RNA polymerase III (Pol III) complex consisting of at least 17 subunits. Interacts with the RPC19/RPAC2 and RPC53/RPC4. Interacts with retrotransposons Ty integrase, targeting Ty1, Ty2 and Ty4 integration upstream of pol III-transcribed genes.

It localises to the nucleus. It is found in the nucleolus. Functionally, DNA-dependent RNA polymerases catalyze the transcription of DNA into RNA using the four ribonucleoside triphosphates as substrates. Common component of RNA polymerases I (Pol I) and III (Pol III) which synthesize ribosomal RNA precursors and small RNAs, such as 5S rRNA and tRNAs, respectively. RPC40 is part of the polymerase core and may function as a clamp element that moves to open and close the cleft. Plays an important role in targeting retrotransposons Ty integration upstream of pol III-transcribed genes such as tRNA genes, allowing Ty1, Ty2 and Ty4 to proliferate and yet minimizing genetic damage. In Saccharomyces cerevisiae (strain ATCC 204508 / S288c) (Baker's yeast), this protein is DNA-directed RNA polymerases I and III subunit RPAC1.